Reading from the N-terminus, the 263-residue chain is 3-deoxy-manno-octulosonate cytidylyltransferase (263 aa).

It belongs to the KdsB family.

The protein localises to the cytoplasm. The catalysed reaction is 3-deoxy-alpha-D-manno-oct-2-ulosonate + CTP = CMP-3-deoxy-beta-D-manno-octulosonate + diphosphate. The protein operates within nucleotide-sugar biosynthesis; CMP-3-deoxy-D-manno-octulosonate biosynthesis; CMP-3-deoxy-D-manno-octulosonate from 3-deoxy-D-manno-octulosonate and CTP: step 1/1. It participates in bacterial outer membrane biogenesis; lipopolysaccharide biosynthesis. Activates KDO (a required 8-carbon sugar) for incorporation into bacterial lipopolysaccharide in Gram-negative bacteria. The chain is 3-deoxy-manno-octulosonate cytidylyltransferase from Burkholderia vietnamiensis (strain G4 / LMG 22486) (Burkholderia cepacia (strain R1808)).